The chain runs to 75 residues: Small ribosomal subunit protein eS28 (75 aa).

This sequence belongs to the eukaryotic ribosomal protein eS28 family.

The chain is Small ribosomal subunit protein eS28 from Natronomonas pharaonis (strain ATCC 35678 / DSM 2160 / CIP 103997 / JCM 8858 / NBRC 14720 / NCIMB 2260 / Gabara) (Halobacterium pharaonis).